The sequence spans 41 residues: Giant hemoglobin AI chain (41 aa).

The Globin domain occupies 2–41 (DCGMLQRIKVKQQWASVYSSGIAREDFGEAIWKAVFALAP).

The protein belongs to the globin family. In terms of assembly, giant hemoglobin is composed of four heme-containing chains (AI to AIV), and two linker chains (AV and AVI).

The chain is Giant hemoglobin AI chain from Lamellibrachia sp. (Deep-sea giant tube worm).